Reading from the N-terminus, the 570-residue chain is Interleukin-1 receptor accessory protein (570 aa).

A signal peptide spans 1-20 (MGLPWCLMSLFFCGILQSHA). 3 consecutive Ig-like C2-type domains span residues 21–128 (SERC…VAFP), 141–230 (PMRL…RTMT), and 243–348 (PHIY…AKVK). Topologically, residues 21-367 (SERCDDWGLD…VELACGFGAT (347 aa)) are extracellular. Cystine bridges form between Cys24/Cys122, Cys47/Cys114, Cys137/Cys181, Cys160/Cys212, and Cys266/Cys332. An N-linked (GlcNAc...) asparagine glycan is attached at Asn57. The segment at 69 to 85 (IWYWTRQDRDLEEPINF) is essential for interaction with PTPRD. 6 N-linked (GlcNAc...) asparagine glycosylation sites follow: Asn107, Asn111, Asn118, Asn157, Asn196, and Asn209. The helical transmembrane segment at 368–388 (VFLVVVLIVVYHVYWLEMVLF) threads the bilayer. The Cytoplasmic segment spans residues 389–570 (YRAHFGTDET…GLSYSSLKNV (182 aa)). Residues 403–546 (KEYDIYVSYA…RFWKQLQVAM (144 aa)) enclose the TIR domain. The active site involves Glu482. Residues 550 to 570 (KSPRWSSSDKQGLSYSSLKNV) are disordered. Over residues 553–570 (RWSSSDKQGLSYSSLKNV) the composition is skewed to polar residues. Ser557 is subject to Phosphoserine.

The protein belongs to the interleukin-1 receptor family. The interleukin-36 receptor complex is a heterodimer of IL1RL2 and IL1RAP; the association is inhibited by IL36RN. The interleukin-1 receptor complex is a heterodimer of IL1R1 and IL1RAP. Associates with IL1R2 to form a non-signaling interleukin-1 receptor complex. Interacts with IL-33-bound IL1RL1 to form the minimal interleukin-33 signaling complex with a 1:1:1 stoichiometry. Interacts with KIT (independently of stimulation with KITLG/SCF). A mast cell-specific KITLG/SCF-induced interleukin-33 signaling complex contains IL1RL1, IL1RAP, KIT and MYD88. Interacts (via the first immunoglobilin domain) with PTPRD (via the third immunoglobilin domain); induces pre- and postsynaptic differentiation of neurons. As to expression, highly expressed in hypothalamus, in the dentate gyrus of hippocampus, cerebral cortex, cerebellum, liver and lung.

The protein resides in the membrane. It carries out the reaction NAD(+) + H2O = ADP-D-ribose + nicotinamide + H(+). In terms of biological role, coreceptor for IL1RL2 in the IL-36 signaling system. Coreceptor with IL1R1 in the IL-1 signaling system. Associates with IL1R1 bound to IL1B to form the high affinity interleukin-1 receptor complex which mediates interleukin-1-dependent activation of NF-kappa-B and other pathways. Signaling involves the recruitment of adapter molecules such as TOLLIP, MYD88, and IRAK1 or IRAK2 via the respective TIR domains of the receptor/coreceptor subunits. Recruits TOLLIP to the signaling complex. Does not bind to interleukin-1 alone; binding of IL1RN to IL1R1, prevents its association with IL1R1 to form a signaling complex. The cellular response is modulated through a non-signaling association with the membrane IL1R2 decoy receptor. Coreceptor for IL1RL1 in the IL-33 signaling system. Can bidirectionally induce pre- and postsynaptic differentiation of neurons by trans-synaptically binding to PTPRD. May play a role in IL1B-mediated costimulation of IFNG production from T-helper 1 (Th1) cells. The polypeptide is Interleukin-1 receptor accessory protein (Il1rap) (Rattus norvegicus (Rat)).